The primary structure comprises 399 residues: 4-hydroxy-3-methylbut-2-enyl diphosphate reductase (399 aa).

Residue Cys66 participates in [4Fe-4S] cluster binding. His96 serves as a coordination point for (2E)-4-hydroxy-3-methylbut-2-enyl diphosphate. His96 lines the dimethylallyl diphosphate pocket. His96 contacts isopentenyl diphosphate. Residue Cys157 participates in [4Fe-4S] cluster binding. His185 provides a ligand contact to (2E)-4-hydroxy-3-methylbut-2-enyl diphosphate. His185 serves as a coordination point for dimethylallyl diphosphate. His185 contributes to the isopentenyl diphosphate binding site. The active-site Proton donor is Glu187. Position 250 (Thr250) interacts with (2E)-4-hydroxy-3-methylbut-2-enyl diphosphate. Cys288 is a [4Fe-4S] cluster binding site. (2E)-4-hydroxy-3-methylbut-2-enyl diphosphate-binding residues include Ser317, Ser318, Asn319, and Ser380. Dimethylallyl diphosphate is bound by residues Ser317, Ser318, Asn319, and Ser380. 4 residues coordinate isopentenyl diphosphate: Ser317, Ser318, Asn319, and Ser380.

Belongs to the IspH family. [4Fe-4S] cluster serves as cofactor.

The enzyme catalyses isopentenyl diphosphate + 2 oxidized [2Fe-2S]-[ferredoxin] + H2O = (2E)-4-hydroxy-3-methylbut-2-enyl diphosphate + 2 reduced [2Fe-2S]-[ferredoxin] + 2 H(+). It catalyses the reaction dimethylallyl diphosphate + 2 oxidized [2Fe-2S]-[ferredoxin] + H2O = (2E)-4-hydroxy-3-methylbut-2-enyl diphosphate + 2 reduced [2Fe-2S]-[ferredoxin] + 2 H(+). The protein operates within isoprenoid biosynthesis; dimethylallyl diphosphate biosynthesis; dimethylallyl diphosphate from (2E)-4-hydroxy-3-methylbutenyl diphosphate: step 1/1. It participates in isoprenoid biosynthesis; isopentenyl diphosphate biosynthesis via DXP pathway; isopentenyl diphosphate from 1-deoxy-D-xylulose 5-phosphate: step 6/6. Functionally, catalyzes the conversion of 1-hydroxy-2-methyl-2-(E)-butenyl 4-diphosphate (HMBPP) into a mixture of isopentenyl diphosphate (IPP) and dimethylallyl diphosphate (DMAPP). Acts in the terminal step of the DOXP/MEP pathway for isoprenoid precursor biosynthesis. This chain is 4-hydroxy-3-methylbut-2-enyl diphosphate reductase, found in Synechococcus sp. (strain CC9902).